Here is a 117-residue protein sequence, read N- to C-terminus: Iron-sulfur cluster insertion protein ErpA (117 aa).

Iron-sulfur cluster-binding residues include cysteine 45, cysteine 109, and cysteine 111.

The protein belongs to the HesB/IscA family. Homodimer. Iron-sulfur cluster is required as a cofactor.

Its function is as follows. Required for insertion of 4Fe-4S clusters for at least IspG. The protein is Iron-sulfur cluster insertion protein ErpA of Saccharophagus degradans (strain 2-40 / ATCC 43961 / DSM 17024).